A 521-amino-acid chain; its full sequence is MMNNIHLNKILILDFGSQYTQLIARRVREIGVYCELSHYDINSDFIKKFNPKGVILSGGPDTVTFDNSARAPSIIFDLNIPILGICYGMQTMAIQLGGHATSADKHEYGFAKVRSCNYSPLLNGINDGGDDLLDVWMSHGIEVKRLPDGFKLIASTDSCNIAGFADINKHYYGLQFHPEVTHTKQGKHILERFVSDICQCKKNWTTDNIITKLVKDLKNQIGSANVLLGLSGGVDSSVVAILLQQAVGKQLTCVFVDNGLLRLNEGNKIMQTFAQNMSVKVIRVNAQEKFYNALSNEDKPEAKRKIIGHAFIEVFEEEARKLNNIQFLAQGTIYPDVIESAGTKSNKTKVIKSHHNVGGLPNSLQLTLVEPIKELFKDEVRKIGVILGLPTHMLNCHPFPGPGLSIRILGQVKQEYVDILRQADTIFIDELYKNNLYNTVNQAFAVFLPIKSVGVTGDARRYDYVISLRAVETIDFMTARWARLPYDFLDLVSNRIMNEIPRISRVVYDISSKPPATIEWE.

The Glutamine amidotransferase type-1 domain maps to 9–203; sequence KILILDFGSQ…VSDICQCKKN (195 aa). Catalysis depends on C86, which acts as the Nucleophile. Catalysis depends on residues H177 and E179. Positions 204-396 constitute a GMPS ATP-PPase domain; that stretch reads WTTDNIITKL…LGLPTHMLNC (193 aa). 231–237 is an ATP binding site; it reads SGGVDSS.

In terms of assembly, homodimer.

It catalyses the reaction XMP + L-glutamine + ATP + H2O = GMP + L-glutamate + AMP + diphosphate + 2 H(+). Its pathway is purine metabolism; GMP biosynthesis; GMP from XMP (L-Gln route): step 1/1. Catalyzes the synthesis of GMP from XMP. The chain is GMP synthase [glutamine-hydrolyzing] from Vesicomyosocius okutanii subsp. Calyptogena okutanii (strain HA).